The chain runs to 290 residues: MIERSHHDLRKVFGELLQGDTCKFAASVFDPISVRMAYDLGFDVAIQGGSVASLQVLGAPDIALLTLDEYVEQVSRVGRASQIPIIGDADHGFGNALNVMRTVTELQKAGVAALTLEDTHLPAKYDEQSHVLIEREEAAAKIYAARFARSDDALSIIARTNVAVTTLDDSIARTAAYQKAGADAICLVGVKDFQHLEALTAHLRVPIMLINYGNPALSNVEKLSAANVRIVVNGHAPYLSAIKATYEALREQSGTEGSELSLPELLSKYTLSDSYREWAKTFLKSEHDSN.

Serine 50 is a substrate binding site. Aspartate 88 is a binding site for Mg(2+). Arginine 159 and histidine 235 together coordinate substrate.

Belongs to the isocitrate lyase/PEP mutase superfamily. Oxaloacetate decarboxylase family. Homotetramer; dimer of dimers. Mg(2+) is required as a cofactor.

It catalyses the reaction oxaloacetate + H(+) = pyruvate + CO2. Its function is as follows. Catalyzes the decarboxylation of oxaloacetate into pyruvate. Seems to play a role in maintaining cellular concentrations of bicarbonate and pyruvate. This Pseudomonas fluorescens (strain Pf0-1) protein is Oxaloacetate decarboxylase 2.